Consider the following 434-residue polypeptide: 3-phosphoshikimate 1-carboxyvinyltransferase (434 aa).

3 residues coordinate 3-phosphoshikimate: K22, S23, and R27. A phosphoenolpyruvate-binding site is contributed by K22. Residues G93 and R121 each contribute to the phosphoenolpyruvate site. The 3-phosphoshikimate site is built by S168, S169, Q170, S199, D320, and K347. Position 170 (Q170) interacts with phosphoenolpyruvate. D320 (proton acceptor) is an active-site residue. Residues R351, R394, and K419 each coordinate phosphoenolpyruvate.

It belongs to the EPSP synthase family. In terms of assembly, monomer.

Its subcellular location is the cytoplasm. It catalyses the reaction 3-phosphoshikimate + phosphoenolpyruvate = 5-O-(1-carboxyvinyl)-3-phosphoshikimate + phosphate. The protein operates within metabolic intermediate biosynthesis; chorismate biosynthesis; chorismate from D-erythrose 4-phosphate and phosphoenolpyruvate: step 6/7. Its function is as follows. Catalyzes the transfer of the enolpyruvyl moiety of phosphoenolpyruvate (PEP) to the 5-hydroxyl of shikimate-3-phosphate (S3P) to produce enolpyruvyl shikimate-3-phosphate and inorganic phosphate. This chain is 3-phosphoshikimate 1-carboxyvinyltransferase, found in Paraburkholderia phymatum (strain DSM 17167 / CIP 108236 / LMG 21445 / STM815) (Burkholderia phymatum).